The chain runs to 714 residues: Fatty acid oxidation complex subunit alpha (714 aa).

An enoyl-CoA hydratase region spans residues 1 to 190 (MEMTSAFTLN…KLGLVDDVVP (190 aa)). A 3-hydroxyacyl-CoA dehydrogenase region spans residues 306-714 (APLNSVGILG…FWKTTATDLQ (409 aa)).

It in the N-terminal section; belongs to the enoyl-CoA hydratase/isomerase family. This sequence in the central section; belongs to the 3-hydroxyacyl-CoA dehydrogenase family. In terms of assembly, heterotetramer of two alpha chains (FadJ) and two beta chains (FadI).

It is found in the cytoplasm. It catalyses the reaction a (3S)-3-hydroxyacyl-CoA = a (2E)-enoyl-CoA + H2O. It carries out the reaction a 4-saturated-(3S)-3-hydroxyacyl-CoA = a (3E)-enoyl-CoA + H2O. The enzyme catalyses a (3S)-3-hydroxyacyl-CoA + NAD(+) = a 3-oxoacyl-CoA + NADH + H(+). The catalysed reaction is (3S)-3-hydroxybutanoyl-CoA = (3R)-3-hydroxybutanoyl-CoA. Its pathway is lipid metabolism; fatty acid beta-oxidation. In terms of biological role, catalyzes the formation of a hydroxyacyl-CoA by addition of water on enoyl-CoA. Also exhibits 3-hydroxyacyl-CoA epimerase and 3-hydroxyacyl-CoA dehydrogenase activities. In Escherichia coli (strain 55989 / EAEC), this protein is Fatty acid oxidation complex subunit alpha.